A 908-amino-acid chain; its full sequence is Disease resistance protein RPP8 (908 aa).

A coiled-coil region spans residues 15–57 (DLLSRESERLQGIDGQLDGLKRQLRSLQSLLKDADAKKHGSDR). Residues 146-459 (RQRVQREIRQ…AEGIYDGSTI (314 aa)) enclose the NB-ARC domain. An ATP-binding site is contributed by 192–199 (GMGGIGKT). 9 LRR repeats span residues 575–600 (LTLLRVLDLSWVKFEGGKLPCSIGGL), 601–623 (IHLRYLSLYEAKVSHLPSTMRNL), 648–673 (MIQLRYLSLPLKMDDKTKLELGDLVN), 693–718 (MTKLRYLAVSLSERCNFETLSSSLRE), 722–746 (LETLNFLFSLETYMVDYMGEFVLDH), 748–770 (IHLKQLGLAVRMSKIPDQHQFPP), 793–820 (LLHLKSVRLARKAFLGSRMVCSKGGFPQ), 842–867 (MPCLRTLTIDDCKKLKELPDGLKYIT), and 882–905 (KEKLVPGGEDYYKVQHIPDVQFIN).

The protein belongs to the disease resistance NB-LRR family. RPP8/HRT subfamily. As to quaternary structure, interacts with the NAC protein TIP. Interacts with MORC1/CRT1. Interacts with COP1 and is subsequently degraded in a 26s proteasome dependent manner. As to expression, mostly expressed in leaves, and, to a lower extent, in roots.

The protein resides in the cell membrane. Its function is as follows. Disease resistance protein. Resistance proteins guard the plant against pathogens that contain an appropriate avirulence protein via an indirect interaction with this avirulence protein. That triggers a defense system including the hypersensitive response, which restricts the pathogen growth. The interaction with TIP (TCV-interacting protein) may be essential for the recognition of the avirulence proteins, and the triggering of the defense response. Triggers resistance to turnip crinkle virus (TCV) via a SAG101-dependent pathway. This Arabidopsis thaliana (Mouse-ear cress) protein is Disease resistance protein RPP8 (RPP8).